We begin with the raw amino-acid sequence, 172 residues long: Large ribosomal subunit protein uL10 (172 aa).

This sequence belongs to the universal ribosomal protein uL10 family. Part of the ribosomal stalk of the 50S ribosomal subunit. The N-terminus interacts with L11 and the large rRNA to form the base of the stalk. The C-terminus forms an elongated spine to which 3 L12 dimers bind in a sequential fashion forming a heptameric L10(L12)2(L12)2(L12)2 complex.

Functionally, forms part of the ribosomal stalk, playing a central role in the interaction of the ribosome with GTP-bound translation factors. This chain is Large ribosomal subunit protein uL10, found in Agrobacterium fabrum (strain C58 / ATCC 33970) (Agrobacterium tumefaciens (strain C58)).